Consider the following 532-residue polypeptide: MNVKKPVILAILDGWGIEEAGVGNAVANADQKFVKEMMGMYPWVKAHASGEWVGLPEGQMGNSEVGHIHLGAGRINMESLAKLNHEVKVDGFLTNEVLVDTFKYVKEHNSALHLMGLFSDGGVHSHMNHMISMYKAAVKFGLTNIKFDLITDGRDTAPKVAEQYINQLLQVIKDNNNIGEIASISGRYFAMDRDKRFERSAAAYITMTERKVDQPKFTDPIEYVKAAYENGLDDEMIVPAYNASVVDSELKANDAMIFTNFRPDRAIQMASIMTNNNYPAWNDEAFKDVEFIGDKIRFVSTMKYADSVTSQFIAYPPTPLTNTLGEYISSLGLKQLRIAETEKIAHVTFFFDGGNDYFKNGLAKPEEISLPHASIDLISSPKVATYDLKPEMSAVEITDKLLEEVKKDEFDLIVLNFANCDMVGHTGNNDATVKGVKVLDEQLKRIHDEFVLKHNGVMVITADHGNAEIMIDETGGPNKKHTTSLVPIIVTDKTIELSDFDPAIAKVAPTILDIMGLEIPKEMTQPSMIIKK.

The Mn(2+) site is built by Asp-13 and Ser-63. Ser-63 functions as the Phosphoserine intermediate in the catalytic mechanism. Residues His-124, 154–155 (RD), Arg-187, Arg-193, 262–265 (RPDR), and Lys-343 contribute to the substrate site. Residues Asp-421, His-425, Asp-463, His-464, and His-481 each coordinate Mn(2+).

It belongs to the BPG-independent phosphoglycerate mutase family. In terms of assembly, monomer. Requires Mn(2+) as cofactor.

The enzyme catalyses (2R)-2-phosphoglycerate = (2R)-3-phosphoglycerate. It functions in the pathway carbohydrate degradation; glycolysis; pyruvate from D-glyceraldehyde 3-phosphate: step 3/5. Functionally, catalyzes the interconversion of 2-phosphoglycerate and 3-phosphoglycerate. The polypeptide is 2,3-bisphosphoglycerate-independent phosphoglycerate mutase (Mesoplasma florum (strain ATCC 33453 / NBRC 100688 / NCTC 11704 / L1) (Acholeplasma florum)).